The primary structure comprises 227 residues: Prolactin-4A1 (227 aa).

The signal sequence occupies residues 1-31 (MHLSLTPQWSSWTVLLLLVSNLLLWENTASA). 2 disulfides stabilise this stretch: Cys-87-Cys-203 and Cys-220-Cys-227. N-linked (GlcNAc...) asparagine glycosylation is present at Asn-175.

Belongs to the somatotropin/prolactin family. Expressed specifically in placenta. Expressed in both trophoblast giant cells and spongiotrophoblast cells.

It is found in the secreted. The protein is Prolactin-4A1 (Prl4a1) of Mus musculus (Mouse).